Here is a 335-residue protein sequence, read N- to C-terminus: Leukocyte immunoglobulin-like receptor subfamily B member 4A (335 aa).

An N-terminal signal peptide occupies residues 1-23 (MIAMLTVLLYLGLILEPRTAVQA). Residues 24 to 238 (GHLPKPIIWA…TEDGLETYQK (215 aa)) lie on the Extracellular side of the membrane. Ig-like C2-type domains follow at residues 42–125 (YTSV…ENPS) and 124–212 (PSLS…KPSN). Cysteine 49 and cysteine 98 are disulfide-bonded. Residues asparagine 133 and asparagine 191 are each glycosylated (N-linked (GlcNAc...) asparagine). A disulfide bond links cysteine 144 and cysteine 196. Residues 239–260 (ILIGVLVSFLLLFFLLLFLILI) form a helical membrane-spanning segment. Topologically, residues 261–335 (GYQYGHKKKA…CIRTQEQNNS (75 aa)) are cytoplasmic. 2 short sequence motifs (ITIM motif) span residues 298–303 (IVYAQV) and 320–325 (VTYAQL).

Interacts (when tyrosine phosphorylated) with SH2 domain-containing phosphatases PTPN6/SHP-1 and PTPN11/SHP-2; interaction with PTPN6 enhances inhibition of mast cell activation. Post-translationally, tyrosine phosphorylated. As to expression, expressed on mast cells and natural killer cells (at protein level). Expressed on neutrophils (at protein level). Expressed on eosinophils (at protein level). Expressed on dendritic cells (at protein level). Expressed on memory and marginal zone B cells (at protein level). Expressed on CD8 T cells (at protein level). Expressed in the uterus of pregnant mice where it is detected at day 4.0 of pregnancy with levels dropping at day 4.5. Highly expressed in the luminal epithelium of uterine endometrium with lower levels in the glandular epithelium.

It localises to the cell membrane. Inhibitory receptor involved in the down-regulation of the immune response. Receptor for FN1. Receptor for integrin ITGAV/ITGB3. Inhibits IgE-mediated mast cell activation, at least in part through interaction with ITGAV/ITGB3. Also inhibits KITLG/SCF-mediated mast cell activation. Through interaction with ITGAV/ITGB3, inhibits antibody production by memory and marginal zone B cells, probably by suppressing their differentiation into plasma cells. Inhibits IFNG production by CD8 T cells, CD4 T cells and natural killer cells. Inhibits antigen presentation by dendritic cells to T cells, preventing T cell activation. Inhibits lipopolysaccharide-mediated neutrophil-dependent vascular injury. Suppresses the allergic inflammatory response by inhibiting infiltration of neutrophils and eosinophils and preventing mast cell degranulation. Inhibits lysis by natural killer cells. This is Leukocyte immunoglobulin-like receptor subfamily B member 4A from Mus musculus (Mouse).